The primary structure comprises 467 residues: ATP synthase subunit beta (467 aa).

Position 157–164 (157–164) interacts with ATP; it reads GGAGVGKT.

Belongs to the ATPase alpha/beta chains family. As to quaternary structure, F-type ATPases have 2 components, CF(1) - the catalytic core - and CF(0) - the membrane proton channel. CF(1) has five subunits: alpha(3), beta(3), gamma(1), delta(1), epsilon(1). CF(0) has three main subunits: a(1), b(2) and c(9-12). The alpha and beta chains form an alternating ring which encloses part of the gamma chain. CF(1) is attached to CF(0) by a central stalk formed by the gamma and epsilon chains, while a peripheral stalk is formed by the delta and b chains.

It is found in the cell inner membrane. It carries out the reaction ATP + H2O + 4 H(+)(in) = ADP + phosphate + 5 H(+)(out). Its function is as follows. Produces ATP from ADP in the presence of a proton gradient across the membrane. The catalytic sites are hosted primarily by the beta subunits. This is ATP synthase subunit beta from Desulfosudis oleivorans (strain DSM 6200 / JCM 39069 / Hxd3) (Desulfococcus oleovorans).